Reading from the N-terminus, the 324-residue chain is Carbonic anhydrase, chloroplastic (324 aa).

It belongs to the beta-class carbonic anhydrase family. In terms of assembly, homohexamer.

The protein localises to the plastid. The protein resides in the chloroplast stroma. It carries out the reaction hydrogencarbonate + H(+) = CO2 + H2O. Functionally, reversible hydration of carbon dioxide. The protein is Carbonic anhydrase, chloroplastic of Hordeum vulgare (Barley).